A 726-amino-acid chain; its full sequence is Probable pre-mRNA-splicing factor ATP-dependent RNA helicase DEAH2 (726 aa).

Residues 71-240 form the Helicase ATP-binding domain; the sequence is LKTLNNNQTL…FSGAPLMKVP (170 aa). Position 84-91 (84-91) interacts with ATP; sequence GETGSGKT. Residues 187-190 carry the DEAH box motif; sequence DEAH. One can recognise a Helicase C-terminal domain in the interval 265–445; the sequence is TVVQIHMCEP…NTVLTLKKLG (181 aa).

It belongs to the DEAD box helicase family. DEAH subfamily. PRP43 sub-subfamily.

It catalyses the reaction ATP + H2O = ADP + phosphate + H(+). May be involved in pre-mRNA splicing. This Arabidopsis thaliana (Mouse-ear cress) protein is Probable pre-mRNA-splicing factor ATP-dependent RNA helicase DEAH2.